A 676-amino-acid chain; its full sequence is Solute carrier family 26 member 10 (676 aa).

Residues 1–24 (MSGPLASGTCSDPEEVSDLKSPLS) form a disordered region. A run of 11 helical transmembrane segments spans residues 101–121 (AVAG…FALL), 124–144 (VPPV…SLLG), 149–165 (LSTG…GSVV), 190–210 (VGAA…MFVL), 226–246 (ALTS…LLGL), 267–287 (ALSQ…VLLV), 300–320 (LLTP…LCFT), 353–373 (ILAD…SLAS), 398–418 (ISSL…SLLV), 426–446 (LAGL…RPFF), and 487–507 (IVTW…VGVV). Residues 539–660 (ESRKLLQVPG…VSVQDAAAHA (122 aa)) form the STAS domain.

The protein belongs to the SLC26A/SulP transporter (TC 2.A.53) family.

Its subcellular location is the membrane. In terms of biological role, chloride/bicarbonate exchanger. The polypeptide is Solute carrier family 26 member 10 (Slc26a10) (Mus musculus (Mouse)).